The chain runs to 196 residues: Small ribosomal subunit protein uS4c (196 aa).

Residues Ala17–Phe36 are disordered. The S4 RNA-binding domain occupies Met89 to Pro157.

This sequence belongs to the universal ribosomal protein uS4 family. Part of the 30S ribosomal subunit. Contacts protein S5. The interaction surface between S4 and S5 is involved in control of translational fidelity.

Its subcellular location is the plastid. The protein localises to the chloroplast. In terms of biological role, one of the primary rRNA binding proteins, it binds directly to 16S rRNA where it nucleates assembly of the body of the 30S subunit. Its function is as follows. With S5 and S12 plays an important role in translational accuracy. The chain is Small ribosomal subunit protein uS4c (rps4) from Calamagrostis epigeios (Wood small-reed grass).